We begin with the raw amino-acid sequence, 48 residues long: Large ribosomal subunit protein bL32 (48 aa).

Residues 28 to 48 are disordered; the sequence is VKDKDGSWKMPHRINKTTGEY.

Belongs to the bacterial ribosomal protein bL32 family.

This Campylobacter concisus (strain 13826) protein is Large ribosomal subunit protein bL32.